The sequence spans 350 residues: Lipoyl synthase, mitochondrial (350 aa).

The [4Fe-4S] cluster site is built by cysteine 83, cysteine 88, cysteine 94, cysteine 113, cysteine 117, cysteine 120, and serine 328. Residues glycine 96–alanine 317 enclose the Radical SAM core domain.

Belongs to the radical SAM superfamily. Lipoyl synthase family. It depends on [4Fe-4S] cluster as a cofactor.

The protein resides in the mitochondrion. It carries out the reaction [[Fe-S] cluster scaffold protein carrying a second [4Fe-4S](2+) cluster] + N(6)-octanoyl-L-lysyl-[protein] + 2 oxidized [2Fe-2S]-[ferredoxin] + 2 S-adenosyl-L-methionine + 4 H(+) = [[Fe-S] cluster scaffold protein] + N(6)-[(R)-dihydrolipoyl]-L-lysyl-[protein] + 4 Fe(3+) + 2 hydrogen sulfide + 2 5'-deoxyadenosine + 2 L-methionine + 2 reduced [2Fe-2S]-[ferredoxin]. It participates in protein modification; protein lipoylation via endogenous pathway; protein N(6)-(lipoyl)lysine from octanoyl-[acyl-carrier-protein]: step 2/2. Its function is as follows. Catalyzes the radical-mediated insertion of two sulfur atoms into the C-6 and C-8 positions of the octanoyl moiety bound to the lipoyl domains of lipoate-dependent enzymes, thereby converting the octanoylated domains into lipoylated derivatives. This Trichoplax adhaerens (Trichoplax reptans) protein is Lipoyl synthase, mitochondrial.